Consider the following 397-residue polypeptide: Nuclear egress protein 2 (397 aa).

The Perinuclear space portion of the chain corresponds to 1–358 (MEMNKVLHQD…GPSRPQSGPW (358 aa)). Disordered regions lie at residues 205 to 245 (RTAG…PPPP) and 291 to 332 (AAAG…PSLE). Position 216 is a phosphoserine (Ser216). Composition is skewed to low complexity over residues 224-239 (PSCSPTMVAAGGAAAG) and 291-301 (AAAGQDVGGSA). A compositionally biased stretch (basic residues) spans 310 to 322 (SRRRGVSTHHRHP). The chain crosses the membrane as a helical span at residues 359–381 (LPARFATLGPLVLALLLVLALLW). The Nuclear portion of the chain corresponds to 382–397 (RGHGQSSSPTRSAHRD).

This sequence belongs to the herpesviridae NEC2 protein family. In terms of assembly, forms a heterohexameric complex with NEC1. Interacts with host UBA7 and RNF170; this interaction promotes UBA7 proteasomal degradation. Phosphorylated. Phosphorylation by viral kinase UL97 at Ser-216 plays an important role for correct viral nuclear egress complex (NEC) localization.

Its subcellular location is the host nucleus inner membrane. In terms of biological role, plays an essential role in virion nuclear egress, the first step of virion release from infected cell. Within the host nucleus, NEC1 interacts with the newly formed capsid through the vertexes and directs it to the inner nuclear membrane by associating with NEC2. Induces the budding of the capsid at the inner nuclear membrane as well as its envelopment into the perinuclear space. There, the NEC1/NEC2 complex promotes the fusion of the enveloped capsid with the outer nuclear membrane and the subsequent release of the viral capsid into the cytoplasm where it will reach the secondary budding sites in the host Golgi or trans-Golgi network. Inhibits host ISGylation and subsequent innate antiviral response by targeting host UBA7 for proteasomal degradation. The polypeptide is Nuclear egress protein 2 (Human cytomegalovirus (strain AD169) (HHV-5)).